The following is a 67-amino-acid chain: Non-specific lipid-transfer protein 2P (67 aa).

4 disulfides stabilise this stretch: Cys2–Cys34, Cys10–Cys24, Cys25–Cys60, and Cys36–Cys67.

Transfer lipids across membranes. May play a role in plant defense or in the biosynthesis of cuticle layers. This chain is Non-specific lipid-transfer protein 2P, found in Triticum aestivum (Wheat).